The following is a 626-amino-acid chain: DNA polymerase 2 (626 aa).

It belongs to the DNA polymerase type-B family.

It carries out the reaction DNA(n) + a 2'-deoxyribonucleoside 5'-triphosphate = DNA(n+1) + diphosphate. Functionally, this polymerase is devoid of exonuclease activity. This Saccharolobus solfataricus (strain ATCC 35092 / DSM 1617 / JCM 11322 / P2) (Sulfolobus solfataricus) protein is DNA polymerase 2 (dpo2).